A 187-amino-acid chain; its full sequence is UPF0200 protein APE_1753.1 (187 aa).

Residue 13-20 (GLPGSGKS) coordinates ATP.

It belongs to the UPF0200 family.

The sequence is that of UPF0200 protein APE_1753.1 from Aeropyrum pernix (strain ATCC 700893 / DSM 11879 / JCM 9820 / NBRC 100138 / K1).